The chain runs to 417 residues: Serine hydroxymethyltransferase 1 (417 aa).

(6S)-5,6,7,8-tetrahydrofolate is bound by residues leucine 121 and 125–127; that span reads GHL. Lysine 229 is subject to N6-(pyridoxal phosphate)lysine. 354 to 356 is a binding site for (6S)-5,6,7,8-tetrahydrofolate; the sequence is SPF.

The protein belongs to the SHMT family. As to quaternary structure, homodimer. Pyridoxal 5'-phosphate serves as cofactor.

Its subcellular location is the cytoplasm. It catalyses the reaction (6R)-5,10-methylene-5,6,7,8-tetrahydrofolate + glycine + H2O = (6S)-5,6,7,8-tetrahydrofolate + L-serine. It participates in one-carbon metabolism; tetrahydrofolate interconversion. The protein operates within amino-acid biosynthesis; glycine biosynthesis; glycine from L-serine: step 1/1. Its function is as follows. Catalyzes the reversible interconversion of serine and glycine with tetrahydrofolate (THF) serving as the one-carbon carrier. This reaction serves as the major source of one-carbon groups required for the biosynthesis of purines, thymidylate, methionine, and other important biomolecules. Also exhibits THF-independent aldolase activity toward beta-hydroxyamino acids, producing glycine and aldehydes, via a retro-aldol mechanism. This chain is Serine hydroxymethyltransferase 1, found in Pseudomonas fluorescens (strain ATCC BAA-477 / NRRL B-23932 / Pf-5).